We begin with the raw amino-acid sequence, 205 residues long: Ras-related protein rab-6.2 (205 aa).

Residues 18–25 (EQSVGKTS), Thr-42, 66–70 (TAGQE), and 124–127 (KTDL) each bind GTP. 2 S-geranylgeranyl cysteine lipidation sites follow: Cys-203 and Cys-205. Residue Cys-205 is modified to Cysteine methyl ester.

The protein belongs to the small GTPase superfamily. Rab family. As to quaternary structure, interacts with GARP complex component vps-52. Interacts (in GTP-bound form) with lin-10. May interact (in GTP-bound form) with eat-17. In terms of tissue distribution, highly expressed in body wall muscles, pharyngeal and vulval muscles, hypodermis, intestine, the gonad, coelomocytes, and neurons, including command interneuron (at protein level). Highly expressed in the terminal bulb muscles.

Its subcellular location is the perikaryon. It is found in the cell projection. The protein localises to the dendrite. The protein resides in the golgi apparatus. It localises to the cytoplasmic vesicle. Its function is as follows. The small GTPases Rab are key regulators of intracellular membrane trafficking, from the formation of transport vesicles to their fusion with membranes. Rabs cycle between an inactive GDP-bound form and an active GTP-bound form that is able to recruit to membranes different set of downstream effectors directly responsible for vesicle formation, movement, tethering and fusion. In its active GTP-bound form, acts redundantly with rab-6.1 (in its active GTP-bound form) to positively regulate the retrograde trafficking of cargo molecules from endosomes to the Golgi compartment. Required for the retrograde trafficking of glr-1, a subunit of AMPA-type glutamate receptors (AMPRs), out of early endosomes and into the Golgi compartment in neurons. Its role in glr-1 trafficking may partly be mediated by its interaction with lin-10 and association with components of the retromer complex such as rme-8. Together with rab-6.2, promotes the retrograde trafficking of mig-14 from endosomes to Golgi structures in the intestine. Plays a role in the epidermis to promote cuticle integrity and impermeability of the cuticle barrier to exogenous molecules. May have a role in the glycosylation of the cuticular surface. Required for seam cell division and alae formation. Required for grinder formation, which is the feeding organ that breaks down food. In contrast to rab-6.1, may play a minor role in the exocytosis of secretory vesicles (cortical granules) during the oocyte-to-embryo transition. The chain is Ras-related protein rab-6.2 from Caenorhabditis elegans.